We begin with the raw amino-acid sequence, 183 residues long: Cell division protein ZapC (183 aa).

Belongs to the ZapC family. Interacts directly with FtsZ.

It localises to the cytoplasm. Contributes to the efficiency of the cell division process by stabilizing the polymeric form of the cell division protein FtsZ. Acts by promoting interactions between FtsZ protofilaments and suppressing the GTPase activity of FtsZ. This is Cell division protein ZapC from Xenorhabdus bovienii (strain SS-2004) (Xenorhabdus nematophila subsp. bovienii).